The chain runs to 99 residues: Aspartyl/glutamyl-tRNA(Asn/Gln) amidotransferase subunit C (99 aa).

Belongs to the GatC family. In terms of assembly, heterotrimer of A, B and C subunits.

It catalyses the reaction L-glutamyl-tRNA(Gln) + L-glutamine + ATP + H2O = L-glutaminyl-tRNA(Gln) + L-glutamate + ADP + phosphate + H(+). It carries out the reaction L-aspartyl-tRNA(Asn) + L-glutamine + ATP + H2O = L-asparaginyl-tRNA(Asn) + L-glutamate + ADP + phosphate + 2 H(+). In terms of biological role, allows the formation of correctly charged Asn-tRNA(Asn) or Gln-tRNA(Gln) through the transamidation of misacylated Asp-tRNA(Asn) or Glu-tRNA(Gln) in organisms which lack either or both of asparaginyl-tRNA or glutaminyl-tRNA synthetases. The reaction takes place in the presence of glutamine and ATP through an activated phospho-Asp-tRNA(Asn) or phospho-Glu-tRNA(Gln). In Burkholderia thailandensis (strain ATCC 700388 / DSM 13276 / CCUG 48851 / CIP 106301 / E264), this protein is Aspartyl/glutamyl-tRNA(Asn/Gln) amidotransferase subunit C.